Consider the following 444-residue polypeptide: Argininosuccinate synthase (444 aa).

ATP is bound by residues 18 to 26 (AFSGGLDTS) and A44. Y100 lines the L-citrulline pocket. Residues G130 and T132 each contribute to the ATP site. 3 residues coordinate L-aspartate: T132, N136, and D137. L-citrulline is bound at residue N136. D137 lines the ATP pocket. R140 and S193 together coordinate L-citrulline. D195 is a binding site for ATP. The L-citrulline site is built by T202, E204, and E281.

This sequence belongs to the argininosuccinate synthase family. Type 2 subfamily. Homotetramer.

The protein resides in the cytoplasm. It catalyses the reaction L-citrulline + L-aspartate + ATP = 2-(N(omega)-L-arginino)succinate + AMP + diphosphate + H(+). The protein operates within amino-acid biosynthesis; L-arginine biosynthesis; L-arginine from L-ornithine and carbamoyl phosphate: step 2/3. The protein is Argininosuccinate synthase of Histophilus somni (strain 129Pt) (Haemophilus somnus).